The sequence spans 254 residues: Imidazole glycerol phosphate synthase subunit HisF (254 aa).

Catalysis depends on residues aspartate 11 and aspartate 130.

The protein belongs to the HisA/HisF family. Heterodimer of HisH and HisF.

The protein resides in the cytoplasm. It carries out the reaction 5-[(5-phospho-1-deoxy-D-ribulos-1-ylimino)methylamino]-1-(5-phospho-beta-D-ribosyl)imidazole-4-carboxamide + L-glutamine = D-erythro-1-(imidazol-4-yl)glycerol 3-phosphate + 5-amino-1-(5-phospho-beta-D-ribosyl)imidazole-4-carboxamide + L-glutamate + H(+). Its pathway is amino-acid biosynthesis; L-histidine biosynthesis; L-histidine from 5-phospho-alpha-D-ribose 1-diphosphate: step 5/9. Its function is as follows. IGPS catalyzes the conversion of PRFAR and glutamine to IGP, AICAR and glutamate. The HisF subunit catalyzes the cyclization activity that produces IGP and AICAR from PRFAR using the ammonia provided by the HisH subunit. This chain is Imidazole glycerol phosphate synthase subunit HisF, found in Laribacter hongkongensis (strain HLHK9).